The following is a 145-amino-acid chain: Transcription antitermination protein NusB (145 aa).

The protein belongs to the NusB family.

In terms of biological role, involved in transcription antitermination. Required for transcription of ribosomal RNA (rRNA) genes. Binds specifically to the boxA antiterminator sequence of the ribosomal RNA (rrn) operons. The protein is Transcription antitermination protein NusB of Burkholderia cenocepacia (strain HI2424).